Reading from the N-terminus, the 102-residue chain is MNQFYALFLVACIAAMANAYEEPDLDALAEFCGKESNRKYCDQIAQLATQHAIGINQEQVRMEKRKPSFVRFGKRSGYPLVIDDEEMRMDKRKPSFVRFGRK.

The signal sequence occupies residues 1–19 (MNQFYALFLVACIAAMANA). The propeptide occupies 20–63 (YEEPDLDALAEFCGKESNRKYCDQIAQLATQHAIGINQEQVRME). Position 72 is a phenylalanine amide (Phe72). A propeptide spanning residues 75 to 90 (RSGYPLVIDDEEMRMD) is cleaved from the precursor. Phe99 bears the Phenylalanine amide mark.

This sequence belongs to the FARP (FMRFamide related peptide) family. Each flp gene is expressed in a distinct set of neurons.

It localises to the secreted. Functionally, FMRFamides and FMRFamide-like peptides are neuropeptides. KPSFVRF-amide: Has no effect on somatic body wall muscle, inhibits contraction of vaginal vera muscle, and inhibits the activity of the dissected pharyngeal myogenic muscle system. Acts as a ligand for the npr-22 receptor in vitro. The chain is FMRFamide-like neuropeptides 9 from Caenorhabditis elegans.